Reading from the N-terminus, the 205-residue chain is UPF0301 protein Bind_0718 (205 aa).

This sequence belongs to the UPF0301 (AlgH) family.

The protein is UPF0301 protein Bind_0718 of Beijerinckia indica subsp. indica (strain ATCC 9039 / DSM 1715 / NCIMB 8712).